A 381-amino-acid chain; its full sequence is Alkanesulfonate monooxygenase (381 aa).

The protein belongs to the SsuD family. Homotetramer.

The catalysed reaction is an alkanesulfonate + FMNH2 + O2 = an aldehyde + FMN + sulfite + H2O + 2 H(+). Functionally, catalyzes the desulfonation of aliphatic sulfonates. This is Alkanesulfonate monooxygenase from Escherichia coli O127:H6 (strain E2348/69 / EPEC).